A 459-amino-acid polypeptide reads, in one-letter code: Probable D-serine dehydratase (459 aa).

Position 119 is an N6-(pyridoxal phosphate)lysine (Lys119).

Belongs to the serine/threonine dehydratase family. DsdA subfamily. Pyridoxal 5'-phosphate serves as cofactor.

It catalyses the reaction D-serine = pyruvate + NH4(+). The chain is Probable D-serine dehydratase from Geobacillus stearothermophilus (Bacillus stearothermophilus).